Reading from the N-terminus, the 410-residue chain is Lissencephaly-1 homolog B (410 aa).

One can recognise a LisH domain in the interval Gln7–Val39. A coiled-coil region spans residues Thr56–Gly82. WD repeat units lie at residues Gly106 to Lys147, Gly148 to Thr187, Gly190 to Thr229, Gly232 to Glu271, Glu274 to Thr333, Gly336 to Ser377, and His379 to Arg410.

It belongs to the WD repeat LIS1/nudF family. As to quaternary structure, can self-associate. Component of the cytosolic PAF-AH (I) heterotetrameric enzyme, which is composed of PAFAH1B1 (beta), PAFAH1B2 (alpha2) and PAFAH1B3 (alpha1) subunits. The catalytic activity of the enzyme resides in the alpha1 (PAFAH1B3) and alpha2 (PAFAH1B2) subunits, whereas the beta subunit (PAFAH1B1) has regulatory activity. Trimer formation is not essential for the catalytic activity. Interacts with dynein, dynactin, nde1 and ndel1. As to expression, enriched in the photoreceptor cell layer.

Its subcellular location is the cytoplasm. It localises to the cytoskeleton. The protein resides in the microtubule organizing center. The protein localises to the centrosome. In terms of biological role, regulatory subunit (beta subunit) of the cytosolic type I platelet-activating factor (PAF) acetylhydrolase (PAF-AH (I)), an enzyme that catalyzes the hydrolyze of the acetyl group at the sn-2 position of PAF and its analogs and participates in the PAF inactivation. Regulates the PAF-AH (I) activity in a catalytic dimer composition-dependent manner. Positively regulates the activity of the minus-end directed microtubule motor protein dynein. May enhance dynein-mediated microtubule sliding by targeting dynein to the microtubule plus end. Required for several dynein- and microtubule-dependent processes such as the maintenance of Golgi integrity, the peripheral transport of microtubule fragments and the coupling of the nucleus and centrosome. May be required for proliferation of neuronal precursors and neuronal migration. Involved in the positioning of nuclei in photoreceptor cells. This is Lissencephaly-1 homolog B (pafah1b1b) from Danio rerio (Zebrafish).